Consider the following 308-residue polypeptide: Probable D,D-dipeptide transport ATP-binding protein DdpF (308 aa).

Positions 8–243 (LRDVHINFPA…PAHPYTRLLL (236 aa)) constitute an ABC transporter domain. 49–56 (GESGCGKS) contacts ATP.

It belongs to the ABC transporter superfamily. The complex is composed of two ATP-binding proteins (DdpD and DdpF), two transmembrane proteins (DdpB and DdpC) and a solute-binding protein (DdpA).

The protein localises to the cell inner membrane. Its function is as follows. Part of the ABC transporter complex DdpABCDF, which is probably involved in D,D-dipeptide transport. Probably responsible for energy coupling to the transport system. This Escherichia coli (strain K12) protein is Probable D,D-dipeptide transport ATP-binding protein DdpF.